The primary structure comprises 488 residues: Proline--tRNA ligase (488 aa).

This sequence belongs to the class-II aminoacyl-tRNA synthetase family. ProS type 3 subfamily. Homodimer.

The protein resides in the cytoplasm. The catalysed reaction is tRNA(Pro) + L-proline + ATP = L-prolyl-tRNA(Pro) + AMP + diphosphate. Functionally, catalyzes the attachment of proline to tRNA(Pro) in a two-step reaction: proline is first activated by ATP to form Pro-AMP and then transferred to the acceptor end of tRNA(Pro). In Borreliella afzelii (strain PKo) (Borrelia afzelii), this protein is Proline--tRNA ligase.